The primary structure comprises 370 residues: Natural killer cell receptor 2B4 (370 aa).

A signal peptide spans 1–21 (MLGQVVTLILLLLLKVYQGKG). 2 consecutive Ig-like domains span residues 22–127 (CQGS…FVFE) and 131–215 (PDKV…LNLT). Topologically, residues 22–229 (CQGSADHVVS…NAHQEFRFWP (208 aa)) are extracellular. Asn71, Asn77, Asn89, Asn164, Asn181, Asn192, Asn200, and Asn213 each carry an N-linked (GlcNAc...) asparagine glycan. A disulfide bond links Cys157 and Cys199. Residues 230–250 (FLVIIVILSALFLGTLACFCV) form a helical membrane-spanning segment. Over 251–370 (WRRKRKEKQS…KELENFDVYS (120 aa)) the chain is Cytoplasmic. 4 short sequence motifs (ITSM) span residues 269–274 (TIYEDV), 295–300 (TIYSMI), 315–320 (TLYSLI), and 340–345 (TIYEVI). Residue Tyr271 is modified to Phosphotyrosine. Tyr297 is subject to Phosphotyrosine; by FYN. Tyr317 carries the post-translational modification Phosphotyrosine. The interval 324 to 370 (RKSGSRKRNHSPSFNSTIYEVIGKSQPKAQNPARLSRKELENFDVYS) is disordered. Residue Tyr342 is modified to Phosphotyrosine; by FYN.

As to quaternary structure, interacts with CD48. Interacts (via phosphorylated ITSM 1-4) with SH2D1A (via SH2 domain); SH2D1A probably mediates association with FYN. Interacts (via phosphorylated ITSM 3) with PTPN11/SHP-2, INPP5D/SHIP1, PTPN6/SHP-1 and CSK; binding of SH2D1A/SAP prevents association with PTPN11, PTPN6 and CSK; conflictingly a similar association has been described for phosphorylated ITSM 1 also including GRB2 and PLCG1. Interacts weakly (via phosphorylated ITSM 2) with PTPN11/SHP-2 and CSK. Interacts with SH2D1B. Interacts with PIK3R1; PI3K recruits SH2D1A. Interacts with MHC class I proteins; the interaction is proposed to prevent self-killing of NK cells. N-linked glycosylation is essential for the binding to its ligand CD48. Also O-glycosylated, in contrast, O-linked sialylation has a negative impact on ligand binding. Post-translationally, phosphorylated by FYN and CSK on tyrosine residues following activation. Coligation with inhibitory receptors such as KIR2DL1 inhibits phosphorylation upon contact of NK cells with sensitive target cells. In terms of tissue distribution, expressed in spleen, PBL, followed by lung, liver, testis and small intestine. Expressed in all natural killer (NK) cells, monocytes and basophils, TCR-gamma/delta+ T-cells, monocytes, basophils, and on a subset of CD8(+) T-cells.

Its subcellular location is the membrane. The protein resides in the cell membrane. It localises to the membrane raft. In terms of biological role, heterophilic receptor of the signaling lymphocytic activation molecule (SLAM) family; its ligand is CD48. SLAM receptors triggered by homo- or heterotypic cell-cell interactions are modulating the activation and differentiation of a wide variety of immune cells and thus are involved in the regulation and interconnection of both innate and adaptive immune response. Activities are controlled by presence or absence of small cytoplasmic adapter proteins, SH2D1A/SAP and/or SH2D1B/EAT-2. Acts as activating natural killer (NK) cell receptor. Activating function implicates association with SH2D1A and FYN. Downstreaming signaling involves predominantly VAV1, and, to a lesser degree, INPP5D/SHIP1 and CBL. Signal attenuation in the absence of SH2D1A is proposed to be dependent on INPP5D and to a lesser extent PTPN6/SHP-1 and PTPN11/SHP-2. Stimulates NK cell cytotoxicity, production of IFN-gamma and granule exocytosis. Optimal expansion and activation of NK cells seems to be dependent on the engagement of CD244 with CD48 expressed on neighboring NK cells. Acts as costimulator in NK activation by enhancing signals by other NK receptors such as NCR3 and NCR1. At early stages of NK cell differentiation may function as an inhibitory receptor possibly ensuring the self-tolerance of developing NK cells. Involved in the regulation of CD8(+) T-cell proliferation; expression on activated T-cells and binding to CD48 provides costimulatory-like function for neighboring T-cells. Inhibits inflammatory responses in dendritic cells (DCs). The polypeptide is Natural killer cell receptor 2B4 (CD244) (Homo sapiens (Human)).